A 271-amino-acid polypeptide reads, in one-letter code: Mediator of RNA polymerase II transcription subunit 18 (271 aa).

Residues 89 to 119 are disordered; sequence FGGNPSSSGDPDVSMSGLEEKPSSSSSSYSY.

The protein belongs to the Mediator complex subunit 18 family. In terms of assembly, component of the Mediator complex.

The protein localises to the nucleus. Functionally, component of the Mediator complex, a coactivator involved in the regulated transcription of nearly all RNA polymerase II-dependent genes. Mediator functions as a bridge to convey information from gene-specific regulatory proteins to the basal RNA polymerase II transcription machinery. Mediator is recruited to promoters by direct interactions with regulatory proteins and serves as a scaffold for the assembly of a functional preinitiation complex with RNA polymerase II and the general transcription factors. The chain is Mediator of RNA polymerase II transcription subunit 18 (srb5) from Aspergillus niger (strain ATCC MYA-4892 / CBS 513.88 / FGSC A1513).